The following is a 575-amino-acid chain: MVNVGPSHAAVAVDASEARKRNISEEVFELRDKKDSTVVIEGEAPVRTFTSSSSNHEREDTYVSKRQVMRDIFAKYLKFIGPGLMVSVAYIDPGNYSTAVDAGASNQFSLLCIILLSNFIAIFLQCLCIKLGSVTGLDLSRACREYLPRWLNWTLYFFAECAVIATDIAEVIGTAIALNILIKVPLPAGVAITVVDVFLIMFTYKPGASSIRFIRIFECFVAVLVVGVCICFAIELAYIPKSTSVKQVFRGFVPSAQMFDHNGIYTAISILGATVMPHSLFLGSALVQPRLLDYDVKHGNYTVSEEQDKVKKSKSTEEIMEEKYFNYRPTNAAIKYCMKYSMVELSITLFTLALFVNCAILVVAGSTLYNSPEADGADLFTIHELLSRNLAPAAGTIFMLALLLSGQSAGVVCTMSGQIVSEGHINWKLQPWQRRLATRCISIIPCLVISICIGREALSKALNASQVVLSIVLPFLVAPLIFFTCKKSIMKTEITVDHTEEDSHNHQNNNDRSAGSVIEQDGSSGMEIENGKDVKIVYMANNWIITVIAIIVWLFLSLLNVYAIVQLGMSHGDIS.

Residues 1-70 lie on the Extracellular side of the membrane; that stretch reads MVNVGPSHAA…TYVSKRQVMR (70 aa). S24 is subject to Phosphoserine. Residues K33 and K34 each participate in a glycyl lysine isopeptide (Lys-Gly) (interchain with G-Cter in ubiquitin) cross-link. Residues 71-91 traverse the membrane as a helical segment; that stretch reads DIFAKYLKFIGPGLMVSVAYI. The Cytoplasmic portion of the chain corresponds to 92 to 108; sequence DPGNYSTAVDAGASNQF. A helical membrane pass occupies residues 109–129; sequence SLLCIILLSNFIAIFLQCLCI. At 130–156 the chain is on the extracellular side; that stretch reads KLGSVTGLDLSRACREYLPRWLNWTLY. Residues 157–177 form a helical membrane-spanning segment; that stretch reads FFAECAVIATDIAEVIGTAIA. Topologically, residues 178–179 are cytoplasmic; that stretch reads LN. The helical transmembrane segment at 180 to 200 threads the bilayer; the sequence is ILIKVPLPAGVAITVVDVFLI. Over 201-218 the chain is Extracellular; sequence MFTYKPGASSIRFIRIFE. A helical transmembrane segment spans residues 219-239; it reads CFVAVLVVGVCICFAIELAYI. Residues 240-266 lie on the Cytoplasmic side of the membrane; it reads PKSTSVKQVFRGFVPSAQMFDHNGIYT. Residues 267–287 traverse the membrane as a helical segment; the sequence is AISILGATVMPHSLFLGSALV. Residues 288–344 lie on the Extracellular side of the membrane; that stretch reads QPRLLDYDVKHGNYTVSEEQDKVKKSKSTEEIMEEKYFNYRPTNAAIKYCMKYSMVE. The helical transmembrane segment at 345 to 365 threads the bilayer; the sequence is LSITLFTLALFVNCAILVVAG. The Cytoplasmic portion of the chain corresponds to 366–396; the sequence is STLYNSPEADGADLFTIHELLSRNLAPAAGT. The helical transmembrane segment at 397 to 417 threads the bilayer; sequence IFMLALLLSGQSAGVVCTMSG. Residues 418 to 463 are Extracellular-facing; the sequence is QIVSEGHINWKLQPWQRRLATRCISIIPCLVISICIGREALSKALN. Residues 464–484 form a helical membrane-spanning segment; that stretch reads ASQVVLSIVLPFLVAPLIFFT. The Cytoplasmic segment spans residues 485–543; that stretch reads CKKSIMKTEITVDHTEEDSHNHQNNNDRSAGSVIEQDGSSGMEIENGKDVKIVYMANNW. A disordered region spans residues 498 to 517; it reads HTEEDSHNHQNNNDRSAGSV. The helical transmembrane segment at 544 to 564 threads the bilayer; that stretch reads IITVIAIIVWLFLSLLNVYAI. The Extracellular portion of the chain corresponds to 565-575; that stretch reads VQLGMSHGDIS.

Belongs to the NRAMP family.

It localises to the cell membrane. It catalyses the reaction Mn(2+)(in) = Mn(2+)(out). Its function is as follows. High-affinity manganese transporter involved in manganese uptake from the extracellular environment. Also contributes to cellular accumulation of other divalent metal ions such as cadmium, cobalt, copper, iron and nickel. The protein is Manganese transporter SMF1 (SMF1) of Saccharomyces cerevisiae (strain ATCC 204508 / S288c) (Baker's yeast).